Here is a 1966-residue protein sequence, read N- to C-terminus: Alpha-protein kinase 2 (1966 aa).

Disordered stretches follow at residues 23–65, 211–231, 1211–1259, 1303–1365, 1386–1423, and 1437–1463; these read NSSP…STGL, AMNS…DTDK, LKSN…AYSD, SLPN…EGAG, KTQG…VNGK, and NKPV…SVRP. Over residues 211–227 the composition is skewed to polar residues; it reads AMNSEQSPDQPFSIASN. Positions 1211–1221 are enriched in low complexity; sequence LKSNKKSSSSD. The segment covering 1325-1342 has biased composition (basic and acidic residues); sequence SDGKMRSKHKEKPDDKQQ. The segment covering 1388-1397 has biased composition (basic residues); it reads QGKKKKKHVQ. Residues 1401 to 1417 show a composition bias toward basic and acidic residues; sequence PKPENDAPTDVRSESRQ. Positions 1577 to 1659 constitute an Ig-like domain; the sequence is PRVVSEIQAD…SLIVANISVS (83 aa). Cys-1599 and Cys-1649 are oxidised to a cystine. The Alpha-type protein kinase domain occupies 1702 to 1934; the sequence is KEDFLSDQYF…YCELLGLVSL (233 aa). The interval 1937-1966 is disordered; the sequence is KPKRTVAPPKPKTQPVPKKKTFGPVLNAKS.

The protein belongs to the protein kinase superfamily. Alpha-type protein kinase family. ALPK subfamily. Expressed in developing cardiac tissue.

It localises to the basolateral cell membrane. It carries out the reaction L-seryl-[protein] + ATP = O-phospho-L-seryl-[protein] + ADP + H(+). It catalyses the reaction L-threonyl-[protein] + ATP = O-phospho-L-threonyl-[protein] + ADP + H(+). Its function is as follows. Protein kinase that recognizes phosphorylation sites in which the surrounding peptides have an alpha-helical conformation. Regulates cardiac development and cardiomyocyte differentiation by negatively regulating Wnt/beta-catenin signaling. The sequence is that of Alpha-protein kinase 2 (alpk2) from Danio rerio (Zebrafish).